The chain runs to 697 residues: Portal protein (697 aa).

The segment at 633–697 is disordered; that stretch reads MSREAAGGVP…RRAGGPYGFH (65 aa). The span at 664–689 shows a compositional bias: basic and acidic residues; the sequence is ITADEERRGPERVGRFRNGGPDDPRR.

It belongs to the herpesviridae portal protein family. Homododecamerizes. Interacts with terminase subunits TRM1 and TRM3.

The protein resides in the virion. Its subcellular location is the host nucleus. In terms of biological role, forms a portal in the viral capsid through which viral DNA is translocated during DNA packaging. Assembles as a dodecamer at a single fivefold axe of the T=16 icosahedric capsid. Binds to the molecular motor that translocates the viral DNA, termed terminase. The protein is Portal protein (UL104) of Homo sapiens (Human).